The following is a 1866-amino-acid chain: Protein NLRC5 (1866 aa).

The disordered stretch occupies residues 105–135; sequence GAEGKSQPESQLHHGLKRPHQSCGSSPRRKQ. The region spanning 222-539 is the NACHT domain; the sequence is RVTVLLGKAG…PKVNKDTLTQ (318 aa). An ATP-binding site is contributed by 228–235; sequence GKAGMGKT. 26 LRR repeats span residues 599 to 622, 713 to 737, 741 to 765, 769 to 792, 869 to 892, 897 to 921, 930 to 953, 976 to 1000, 1004 to 1026, 1031 to 1058, 1138 to 1161, 1162 to 1184, 1242 to 1265, 1272 to 1294, 1462 to 1488, 1493 to 1516, 1521 to 1544, 1554 to 1577, 1578 to 1600, 1605 to 1628, 1633 to 1656, 1661 to 1684, 1687 to 1714, 1715 to 1739, 1741 to 1762, and 1795 to 1818; these read LKKL…VDET, MGRL…LVKA, CPQL…IVEV, LPRL…CLAR, GPHL…LMAE, LHIA…VLRA, ELHI…EQKG, SRRM…ALGG, LGHL…RLAQ, LGAL…CFST, LELQ…CLPQ, LPQL…FLLA, CKDL…CLLE, ISGL…LLET, CARL…LLQS, LSEL…HLAS, CHHL…ALMR, RLDL…LSQM, TCLQ…HLSE, ATSL…HLAT, LPEL…QLAE, CRRL…GLAQ, PQHL…ALDG, SPHL…CMEL, LLRQ…LLTS, and MGRL…LLAE.

It belongs to the NLRP family. As to quaternary structure, interacts with CHUK and IKBKB; prevents CHUK and IKBKB phosphorylation and inhibits their kinase activity. Interacts with RIGI and IFIH1; blocks the interaction of MAVS to RIGI. As to expression, expressed in spleen, thymus, lung, brain, tonsil, heart and prostate.

It localises to the cytoplasm. Its function is as follows. Probable regulator of the NF-kappa-B and type I interferon signaling pathways. May also regulate the type II interferon signaling pathway. Plays a role in homeostatic control of innate immunity and in antiviral defense mechanisms. The protein is Protein NLRC5 (NLRC5) of Homo sapiens (Human).